The chain runs to 904 residues: Protein translocase subunit SecA (904 aa).

ATP is bound by residues Gln89, 107-111 (GEGKT), and Asp502. Cys888, Cys890, Cys899, and His900 together coordinate Zn(2+).

Belongs to the SecA family. As to quaternary structure, monomer and homodimer. Part of the essential Sec protein translocation apparatus which comprises SecA, SecYEG and auxiliary proteins SecDF-YajC and YidC. The cofactor is Zn(2+).

It is found in the cell inner membrane. The protein resides in the cytoplasm. The enzyme catalyses ATP + H2O + cellular proteinSide 1 = ADP + phosphate + cellular proteinSide 2.. In terms of biological role, part of the Sec protein translocase complex. Interacts with the SecYEG preprotein conducting channel. Has a central role in coupling the hydrolysis of ATP to the transfer of proteins into and across the cell membrane, serving both as a receptor for the preprotein-SecB complex and as an ATP-driven molecular motor driving the stepwise translocation of polypeptide chains across the membrane. In Roseobacter denitrificans (strain ATCC 33942 / OCh 114) (Erythrobacter sp. (strain OCh 114)), this protein is Protein translocase subunit SecA.